Consider the following 97-residue polypeptide: Large ribosomal subunit protein uL23 (97 aa).

The protein belongs to the universal ribosomal protein uL23 family. As to quaternary structure, part of the 50S ribosomal subunit. Contacts protein L29, and trigger factor when it is bound to the ribosome.

Functionally, one of the early assembly proteins it binds 23S rRNA. One of the proteins that surrounds the polypeptide exit tunnel on the outside of the ribosome. Forms the main docking site for trigger factor binding to the ribosome. The protein is Large ribosomal subunit protein uL23 of Mesorhizobium japonicum (strain LMG 29417 / CECT 9101 / MAFF 303099) (Mesorhizobium loti (strain MAFF 303099)).